A 916-amino-acid chain; its full sequence is Pertactin autotransporter (916 aa).

The signal sequence occupies residues 1-37 (MNMSLSRIVKAAPLRRTTLAMALGALGALGAAPAAHA). Residues 263–265 (RGD) carry the Cell attachment site; involved in adhesion to various eukaryotic cell lines motif. 3 repeat units span residues 269–273 (GGAVP), 274–278 (GGAVP), and 279–283 (GGAVP). Positions 269-288 (GGAVPGGAVPGGAVPGGFGP) are 4 X 5 AA tandem repeats of G-G-A-V-P. One copy of the 4; approximate repeat lies at 284–288 (GGFGP). A disordered region spans residues 564 to 613 (SLVGAKAPPAPKPAPQPGPQPGPQPPQPPQPPQRQPEAPAPQPPAGRELS). The segment covering 571-607 (PPAPKPAPQPGPQPGPQPPQPPQPPQRQPEAPAPQPP) has biased composition (pro residues). The interval 578-606 (PQPGPQPGPQPPQPPQPPQRQPEAPAPQP) is 6 X 3 AA repeats of P-Q-P. The 269-residue stretch at 648–916 (LNPDAGGAWG…TFHAGYRYSW (269 aa)) folds into the Autotransporter domain. The short motif at 706-708 (RGD) is the Cell attachment site element.

As to quaternary structure, monomer.

The protein resides in the periplasm. The protein localises to the secreted. It localises to the cell surface. It is found in the cell outer membrane. Functionally, agglutinogen that binds to eukaryotic cells; a process mediated by the R-G-D sequence. Pertactin may have a role in bacterial adhesion, and thus play a role in virulence. May contribute to the disease state of whooping cough. The sequence is that of Pertactin autotransporter (prn) from Bordetella bronchiseptica (strain ATCC BAA-588 / NCTC 13252 / RB50) (Alcaligenes bronchisepticus).